The sequence spans 409 residues: Rho-GTPase-activating protein BAG7 (409 aa).

A compositionally biased stretch (polar residues) spans 1–26 (MFNMNLLSTPSSEEGSPQNRSSSMSS). A disordered region spans residues 1–32 (MFNMNLLSTPSSEEGSPQNRSSSMSSVEGKKD). Residues 50–257 (VSLEESLKVA…FLILHASDII (208 aa)) enclose the Rho-GAP domain. A disordered region spans residues 362–409 (KLLGNVGNSSNTGIKDPTERVPRGEHKTKHKQRQSWLRRLTSPSRTQP). A compositionally biased stretch (basic and acidic residues) spans 377–386 (DPTERVPRGE).

Interacts with RHO1.

In terms of biological role, acts in signal transduction. Activates RHO1. The chain is Rho-GTPase-activating protein BAG7 (BAG7) from Saccharomyces cerevisiae (strain ATCC 204508 / S288c) (Baker's yeast).